The primary structure comprises 720 residues: Polyribonucleotide nucleotidyltransferase (720 aa).

Mg(2+) is bound by residues aspartate 484 and aspartate 490. The KH domain occupies 551 to 610 (PRMYKINIDPSKIGSVIGSGGKTIRSIIEQTNTTVDIENDGTVVIGAIDEASAKKAIKII). The 69-residue stretch at 620–688 (GSIYTGKVTR…NQGRVNLSHR (69 aa)) folds into the S1 motif domain. Residues 697-720 (PISRNRDSQPRRPGPFRPSDRSNS) are disordered.

Belongs to the polyribonucleotide nucleotidyltransferase family. Requires Mg(2+) as cofactor.

The protein localises to the cytoplasm. The catalysed reaction is RNA(n+1) + phosphate = RNA(n) + a ribonucleoside 5'-diphosphate. Functionally, involved in mRNA degradation. Catalyzes the phosphorolysis of single-stranded polyribonucleotides processively in the 3'- to 5'-direction. In Dehalococcoides mccartyi (strain ATCC BAA-2100 / JCM 16839 / KCTC 5957 / BAV1), this protein is Polyribonucleotide nucleotidyltransferase.